Here is a 344-residue protein sequence, read N- to C-terminus: Uroporphyrinogen decarboxylase (344 aa).

Residues 27–31 (RQAGR), phenylalanine 46, aspartate 76, tyrosine 151, serine 206, and histidine 319 each bind substrate.

It belongs to the uroporphyrinogen decarboxylase family. Homodimer.

It is found in the cytoplasm. It carries out the reaction uroporphyrinogen III + 4 H(+) = coproporphyrinogen III + 4 CO2. The protein operates within porphyrin-containing compound metabolism; protoporphyrin-IX biosynthesis; coproporphyrinogen-III from 5-aminolevulinate: step 4/4. Its function is as follows. Catalyzes the decarboxylation of four acetate groups of uroporphyrinogen-III to yield coproporphyrinogen-III. This Halalkalibacterium halodurans (strain ATCC BAA-125 / DSM 18197 / FERM 7344 / JCM 9153 / C-125) (Bacillus halodurans) protein is Uroporphyrinogen decarboxylase.